A 74-amino-acid chain; its full sequence is Translational regulator CsrA (74 aa).

This sequence belongs to the CsrA/RsmA family. As to quaternary structure, homodimer; the beta-strands of each monomer intercalate to form a hydrophobic core, while the alpha-helices form wings that extend away from the core.

The protein resides in the cytoplasm. Functionally, a translational regulator that binds mRNA to regulate translation initiation and/or mRNA stability. Usually binds in the 5'-UTR at or near the Shine-Dalgarno sequence preventing ribosome-binding, thus repressing translation. Its main target seems to be the major flagellin gene, while its function is anatagonized by FliW. This is Translational regulator CsrA from Alkaliphilus oremlandii (strain OhILAs) (Clostridium oremlandii (strain OhILAs)).